The sequence spans 329 residues: Phenylalanine--tRNA ligase alpha subunit (329 aa).

Glutamate 254 serves as a coordination point for Mg(2+).

This sequence belongs to the class-II aminoacyl-tRNA synthetase family. Phe-tRNA synthetase alpha subunit type 1 subfamily. Tetramer of two alpha and two beta subunits. Requires Mg(2+) as cofactor.

It localises to the cytoplasm. The enzyme catalyses tRNA(Phe) + L-phenylalanine + ATP = L-phenylalanyl-tRNA(Phe) + AMP + diphosphate + H(+). The chain is Phenylalanine--tRNA ligase alpha subunit from Haemophilus influenzae (strain PittEE).